We begin with the raw amino-acid sequence, 162 residues long: Ribosome-binding factor A (162 aa).

The disordered stretch occupies residues 124–162; that stretch reads ARVRSGAKPAGEADPYRESGSGVEPGRDGSIGDDDQPEY.

This sequence belongs to the RbfA family. Monomer. Binds 30S ribosomal subunits, but not 50S ribosomal subunits or 70S ribosomes.

The protein localises to the cytoplasm. In terms of biological role, one of several proteins that assist in the late maturation steps of the functional core of the 30S ribosomal subunit. Associates with free 30S ribosomal subunits (but not with 30S subunits that are part of 70S ribosomes or polysomes). Required for efficient processing of 16S rRNA. May interact with the 5'-terminal helix region of 16S rRNA. This is Ribosome-binding factor A from Mycolicibacterium paratuberculosis (strain ATCC BAA-968 / K-10) (Mycobacterium paratuberculosis).